The sequence spans 452 residues: Phosphoglucosamine mutase (452 aa).

Ser-104 acts as the Phosphoserine intermediate in catalysis. Residues Ser-104, Asp-246, Asp-248, and Asp-250 each coordinate Mg(2+). Position 104 is a phosphoserine (Ser-104).

Belongs to the phosphohexose mutase family. The cofactor is Mg(2+). Activated by phosphorylation.

The enzyme catalyses alpha-D-glucosamine 1-phosphate = D-glucosamine 6-phosphate. Catalyzes the conversion of glucosamine-6-phosphate to glucosamine-1-phosphate. The chain is Phosphoglucosamine mutase from Streptomyces coelicolor (strain ATCC BAA-471 / A3(2) / M145).